Here is a 528-residue protein sequence, read N- to C-terminus: MGDAPSPEEKLHLITRNLQEVLGEEKLKEILKERELKIYWGTATTGKPHVAYFVPMSKIADFLKAGCEVTILFADLHAYLDNMKAPWELLELRVSYYENVIKAMLESIGVPLEKLTFIKGTDYQLSKEYTLDVYRLSSVVTQHDSKKAGAEVVKQVEHPLLSGLLYPGLQALDEEYLKVDAQFGGVDQRKIFTFAEKYLPALGYSKRVHLMNPMVPGLTGSKMSSSEEESKIDLLDRKEDVKKKLKKAFCEPGNVENNGVLSFIKHVLFPLKSEFVILRDERWGGNKTYTAYMDLEKDFAAEVVHPGDLKNSVDVALNKLLDPIREKFNTPALKKLASAAYPDPSKQKPMAKGPAKNSEPEEVIPSRLDIRVGKIITVEKHPDADSLYVEKIDVGEAEPRTVVSGLVQFVPKEELQDRLVVVLCNLKPQKMRGVESQGMLLCASIEGINRQVEPLDPPAGSAPGERVFVKGYEKGQPDEELKPKKKVFEKLQADFKISEECIAQWKQTNFMTKLGSISCKSLKGGNIS.

Position 1 is an N-acetylmethionine (Met-1). Gly-2 carries the N-acetylglycine; in Tyrosine--tRNA ligase, cytoplasmic, N-terminally processed modification. Tyr-39 lines the L-tyrosine pocket. A trans-resveratrol-binding site is contributed by Tyr-39. Residues 44 to 52 (TTGKPHVAY) carry the 'HIGH' region motif. The L-tyrosine site is built by Tyr-166, Gln-170, Asp-173, and Gln-188. Positions 170 and 173 each coordinate trans-resveratrol. At Lys-197 the chain carries N6-acetyllysine. Residue Ser-205 is modified to Phosphoserine. Lys-206 bears the N6-acetyllysine mark. A 'KMSKS' region motif is present at residues 222-226 (KMSSS). Residues 242–247 (KKKLKK) carry the Nuclear localization signal motif. The interval 339-363 (AAYPDPSKQKPMAKGPAKNSEPEEV) is disordered. The 105-residue stretch at 364–468 (IPSRLDIRVG…AGSAPGERVF (105 aa)) folds into the tRNA-binding domain. Ser-386 carries the post-translational modification Phosphoserine. N6-acetyllysine is present on residues Lys-474, Lys-482, and Lys-490.

Belongs to the class-I aminoacyl-tRNA synthetase family. As to quaternary structure, homodimer. Interacts (when binding to resveratrol) with PARP1; interaction stimulates the poly-ADP-ribosyltransferase activity of PARP1.

It is found in the cytoplasm. Its subcellular location is the nucleus. It carries out the reaction tRNA(Tyr) + L-tyrosine + ATP = L-tyrosyl-tRNA(Tyr) + AMP + diphosphate + H(+). Resveratrol strongly inhibits the tyrosine--tRNA ligase activity. Its function is as follows. Tyrosine--tRNA ligase that catalyzes the attachment of tyrosine to tRNA(Tyr) in a two-step reaction: tyrosine is first activated by ATP to form Tyr-AMP and then transferred to the acceptor end of tRNA(Tyr). Also acts as a positive regulator of poly-ADP-ribosylation in the nucleus, independently of its tyrosine--tRNA ligase activity. Activity is switched upon resveratrol-binding: resveratrol strongly inhibits the tyrosine--tRNA ligase activity and promotes relocalization to the nucleus, where YARS1 specifically stimulates the poly-ADP-ribosyltransferase activity of PARP1. The sequence is that of Tyrosine--tRNA ligase, cytoplasmic (YARS1) from Pongo abelii (Sumatran orangutan).